Here is a 138-residue protein sequence, read N- to C-terminus: Histone H3 (138 aa).

The segment at 1–49 is disordered; it reads MARTKQTARKSTGGKAPRKQLATKAARKQAPSQVSGGVKKPHRYRPGTV. K5 bears the N6,N6,N6-trimethyllysine; alternate mark. K5 is subject to N6,N6-dimethyllysine; alternate. K5 and K10 each carry N6-methyllysine; alternate. Position 10 is an N6-acetyllysine; alternate (K10). Phosphoserine is present on S11. The residue at position 15 (K15) is an N6,N6-dimethyllysine; alternate. N6-methyllysine; alternate occurs at positions 15, 19, 24, 28, and 39. K15, K19, K24, K28, and K39 each carry N6-acetyllysine; alternate. N6,N6,N6-trimethyllysine; alternate occurs at positions 28 and 39. N6,N6-dimethyllysine; alternate occurs at positions 28 and 39. N6-acetyllysine occurs at positions 59 and 67. K82 is modified (N6,N6,N6-trimethyllysine; alternate). The residue at position 82 (K82) is an N6,N6-dimethyllysine; alternate. Position 82 is an N6-methyllysine; alternate (K82).

Belongs to the histone H3 family. As to quaternary structure, the nucleosome is a histone octamer containing two molecules each of H2A, H2B, H3 and H4 assembled in one H3-H4 heterotetramer and two H2A-H2B heterodimers. The octamer wraps approximately 147 bp of DNA. In terms of processing, phosphorylated to form H3S10ph. H3S10ph promotes subsequent H3K14ac formation and is required for transcriptional activation through TBP recruitment to the promoters. Post-translationally, mono-, di- and trimethylated by the COMPASS complex to form H3K4me1/2/3. H3K4me activates gene expression by regulating transcription elongation and plays a role in telomere length maintenance. H3K4me enrichment correlates with transcription levels, and occurs in a 5' to 3' gradient with H3K4me3 enrichment at the 5'-end of genes, shifting to H3K4me2 and then H3K4me1. Methylated by SET2 to form H3K36me. H3K36me represses gene expression. Methylated by DOT1 to form H3K79me. H3K79me is required for association of SIR proteins with telomeric regions and for telomeric silencing. The COMPASS-mediated formation of H3K4me2/3 and the DOT1-mediated formation of H3K79me require H2BK123ub1. Acetylation of histone H3 leads to transcriptional activation. H3K14ac formation by GCN5 is promoted by H3S10ph. H3K14ac can also be formed by ESA1. H3K56ac formation occurs predominantly in newly synthesized H3 molecules during G1, S and G2/M of the cell cycle and may be involved in DNA repair.

Its subcellular location is the nucleus. It is found in the chromosome. Core component of nucleosome. Nucleosomes wrap and compact DNA into chromatin, limiting DNA accessibility to the cellular machineries which require DNA as a template. Histones thereby play a central role in transcription regulation, DNA repair, DNA replication and chromosomal stability. DNA accessibility is regulated via a complex set of post-translational modifications of histones, also called histone code, and nucleosome remodeling. This Cryptococcus neoformans var. neoformans serotype D (strain B-3501A) (Filobasidiella neoformans) protein is Histone H3 (HHT1).